The primary structure comprises 1200 residues: Chromosome partition protein Smc (1200 aa).

An ATP-binding site is contributed by 33–40 (PNGSGKSN). The disordered stretch occupies residues 90–109 (GENLSEPGANHNGNGNGAKI). The stretch at 202-528 (EVQDREERCQ…AASQAQQEVQ (327 aa)) forms a coiled coil. The 115-residue stretch at 542-656 (PGVCGLVAQL…VFDTLVNARN (115 aa)) folds into the SMC hinge domain. A coiled-coil region spans residues 692–1046 (TMVSEDTAEV…ERTELLLRIE (355 aa)).

Belongs to the SMC family. Homodimer.

It localises to the cytoplasm. Required for chromosome condensation and partitioning. This is Chromosome partition protein Smc from Synechocystis sp. (strain ATCC 27184 / PCC 6803 / Kazusa).